Reading from the N-terminus, the 137-residue chain is Mandibular organ-inhibiting hormone (137 aa).

The first 26 residues, 1 to 26 (MTTKCTVMAVVLAACICLQVLPQAYG), serve as a signal peptide directing secretion. Q63 is modified (pyrrolidone carboxylic acid). Disulfide bonds link C69/C105, C85/C101, and C88/C114. At V134 the chain carries Valine amide.

The protein belongs to the arthropod CHH/MIH/GIH/VIH hormone family. As to expression, produced by the medulla terminalis X-organ in the eyestalks and transported to the sinus gland where it is stored and released.

Its subcellular location is the secreted. Functionally, represses the synthesis of methyl farnesoate, the precursor of insect juvenile hormone III in the mandibular organ. Also has hyperglycemic activity. The protein is Mandibular organ-inhibiting hormone of Libinia emarginata (Portly spider crab).